The primary structure comprises 305 residues: Ribonuclease Z (305 aa).

Zn(2+)-binding residues include His-61, His-63, Asp-65, His-66, His-141, Asp-209, and His-268. Residue Asp-65 is the Proton acceptor of the active site.

The protein belongs to the RNase Z family. As to quaternary structure, homodimer. Zn(2+) is required as a cofactor.

The catalysed reaction is Endonucleolytic cleavage of RNA, removing extra 3' nucleotides from tRNA precursor, generating 3' termini of tRNAs. A 3'-hydroxy group is left at the tRNA terminus and a 5'-phosphoryl group is left at the trailer molecule.. In terms of biological role, zinc phosphodiesterase, which displays some tRNA 3'-processing endonuclease activity. Probably involved in tRNA maturation, by removing a 3'-trailer from precursor tRNA. The protein is Ribonuclease Z of Clostridioides difficile (strain 630) (Peptoclostridium difficile).